An 88-amino-acid chain; its full sequence is UPF0297 protein str1959 (88 aa).

Belongs to the UPF0297 family.

This chain is UPF0297 protein str1959, found in Streptococcus thermophilus (strain CNRZ 1066).